The sequence spans 518 residues: Glutamate--cysteine ligase (518 aa).

This sequence belongs to the glutamate--cysteine ligase type 1 family. Type 1 subfamily.

The catalysed reaction is L-cysteine + L-glutamate + ATP = gamma-L-glutamyl-L-cysteine + ADP + phosphate + H(+). It functions in the pathway sulfur metabolism; glutathione biosynthesis; glutathione from L-cysteine and L-glutamate: step 1/2. The chain is Glutamate--cysteine ligase from Salmonella typhi.